The chain runs to 455 residues: Argininosuccinate lyase (455 aa).

Belongs to the lyase 1 family. Argininosuccinate lyase subfamily.

The protein resides in the cytoplasm. The enzyme catalyses 2-(N(omega)-L-arginino)succinate = fumarate + L-arginine. The protein operates within amino-acid biosynthesis; L-arginine biosynthesis; L-arginine from L-ornithine and carbamoyl phosphate: step 3/3. The protein is Argininosuccinate lyase of Caulobacter sp. (strain K31).